Reading from the N-terminus, the 419-residue chain is Creatine kinase S-type, mitochondrial (419 aa).

The N-terminal 39 residues, M1–A39, are a transit peptide targeting the mitochondrion. Residues K46–N132 form the Phosphagen kinase N-terminal domain. Residues Y159–L401 form the Phosphagen kinase C-terminal domain. Residues S162–R166, H225, R270, R326, R354–V359, and D369 contribute to the ATP site.

Belongs to the ATP:guanido phosphotransferase family. In terms of assembly, exists as an octamer composed of four MTCK homodimers. In terms of tissue distribution, expressed in the leg muscle and heart.

Its subcellular location is the mitochondrion inner membrane. The enzyme catalyses creatine + ATP = N-phosphocreatine + ADP + H(+). Reversibly catalyzes the transfer of phosphate between ATP and various phosphogens (e.g. creatine phosphate). Creatine kinase isoenzymes play a central role in energy transduction in tissues with large, fluctuating energy demands, such as skeletal muscle, heart, brain and spermatozoa. The chain is Creatine kinase S-type, mitochondrial (CKMT2) from Gallus gallus (Chicken).